A 97-amino-acid polypeptide reads, in one-letter code: UPF0125 protein plu3376 (97 aa).

The protein belongs to the UPF0125 (RnfH) family.

The chain is UPF0125 protein plu3376 from Photorhabdus laumondii subsp. laumondii (strain DSM 15139 / CIP 105565 / TT01) (Photorhabdus luminescens subsp. laumondii).